Here is a 308-residue protein sequence, read N- to C-terminus: Putative proline iminopeptidase (308 aa).

The AB hydrolase-1 domain maps to 30 to 290; it reads KPVLYIHGGP…LYVTNNAGHS (261 aa). Ser105 acts as the Nucleophile in catalysis. Asp261 is a catalytic residue. His289 (proton donor) is an active-site residue.

This sequence belongs to the peptidase S33 family.

It localises to the cytoplasm. It catalyses the reaction Release of N-terminal proline from a peptide.. In terms of biological role, specifically catalyzes the removal of N-terminal proline residues from peptides. This Mycoplasma genitalium (strain ATCC 33530 / DSM 19775 / NCTC 10195 / G37) (Mycoplasmoides genitalium) protein is Putative proline iminopeptidase (pip).